The following is a 422-amino-acid chain: MSADGKFGDYGGQYVPEALMPAIEELTDAYERYVLDNEDGFMDDFRARLRDFGGRPTPLQRADRLSERYDREVYLKREDLLHGGAHKLNNALGQVLLAKYMGKERIIAETGAGQHGTATAMACAHLDMPCEIYMGERDINRQRPNVFRMKLNGSEVNPVTVGRGTLKEAISETMRDWATNVEDTHYVIGSVVGPHPFPSMVRDFQSVISEEARTQAREKLGRLPDAVVACAGGGSNTMGAFAEFVDDEETALYAVEAGGSTLEVDEEAGVAPNSASLTTGSEGILHGARTRLLQDRDGQIMESHSVSSGLDYAGVGPELAHLVDTGRVTAVNVDDDAALTAFHRLSQMEGIIPALESAHAFGYLESVVGPDAPDAENADDLGEYVVVNVSGRGDKDLESAIEETYERDIDIAPNMDEFTGGL.

K87 is subject to N6-(pyridoxal phosphate)lysine.

This sequence belongs to the TrpB family. As to quaternary structure, tetramer of two alpha and two beta chains. It depends on pyridoxal 5'-phosphate as a cofactor.

It catalyses the reaction (1S,2R)-1-C-(indol-3-yl)glycerol 3-phosphate + L-serine = D-glyceraldehyde 3-phosphate + L-tryptophan + H2O. The protein operates within amino-acid biosynthesis; L-tryptophan biosynthesis; L-tryptophan from chorismate: step 5/5. Its function is as follows. The beta subunit is responsible for the synthesis of L-tryptophan from indole and L-serine. In Haloferax volcanii (strain ATCC 29605 / DSM 3757 / JCM 8879 / NBRC 14742 / NCIMB 2012 / VKM B-1768 / DS2) (Halobacterium volcanii), this protein is Tryptophan synthase beta chain (trpB).